A 128-amino-acid polypeptide reads, in one-letter code: Fluoride-specific ion channel FluC (128 aa).

4 helical membrane passes run 5–25 (IVAI…LGLA), 35–55 (LGTL…AVVF), 67–87 (LFVI…SVEV), and 96–116 (FGWA…LTAL). Positions 75 and 78 each coordinate Na(+).

It belongs to the fluoride channel Fluc/FEX (TC 1.A.43) family.

It localises to the cell inner membrane. It catalyses the reaction fluoride(in) = fluoride(out). Its activity is regulated as follows. Na(+) is not transported, but it plays an essential structural role and its presence is essential for fluoride channel function. Fluoride-specific ion channel. Important for reducing fluoride concentration in the cell, thus reducing its toxicity. The polypeptide is Fluoride-specific ion channel FluC (Burkholderia vietnamiensis (strain G4 / LMG 22486) (Burkholderia cepacia (strain R1808))).